Reading from the N-terminus, the 332-residue chain is Cell growth regulator with RING finger domain protein 1 (332 aa).

The segment at 274–309 (CVVCQNGTVNWVLLPCRHTCLCDGCVKYFQQCPMCR) adopts an RING-type zinc-finger fold.

Ubiquitously expressed with high expression in testis and the cerebellum.

The protein resides in the nucleus. Its subcellular location is the endoplasmic reticulum. Its function is as follows. Able to inhibit growth in several cell lines. This chain is Cell growth regulator with RING finger domain protein 1 (CGRRF1), found in Homo sapiens (Human).